A 358-amino-acid polypeptide reads, in one-letter code: Methylthioribose-1-phosphate isomerase (358 aa).

Residues 54-56 (RGA), R96, and Q205 each bind substrate. D246 serves as the catalytic Proton donor. 256–257 (NK) provides a ligand contact to substrate.

This sequence belongs to the eIF-2B alpha/beta/delta subunits family. MtnA subfamily.

It carries out the reaction 5-(methylsulfanyl)-alpha-D-ribose 1-phosphate = 5-(methylsulfanyl)-D-ribulose 1-phosphate. Its pathway is amino-acid biosynthesis; L-methionine biosynthesis via salvage pathway; L-methionine from S-methyl-5-thio-alpha-D-ribose 1-phosphate: step 1/6. Its function is as follows. Catalyzes the interconversion of methylthioribose-1-phosphate (MTR-1-P) into methylthioribulose-1-phosphate (MTRu-1-P). The protein is Methylthioribose-1-phosphate isomerase of Stutzerimonas stutzeri (strain A1501) (Pseudomonas stutzeri).